The sequence spans 424 residues: UDP-sugar transporter protein SLC35A5 (424 aa).

Topologically, residues 1-8 (MEKQCCSH) are cytoplasmic. A helical membrane pass occupies residues 9-29 (PVICSLSTMYTFLLGAIFIAL). The Lumenal portion of the chain corresponds to 30–53 (SSSRILLVKYSANEENKYDYLPTT). A helical transmembrane segment spans residues 54–74 (VNVCSELVKLVFCVLVSFCVI). Residues 75–93 (KKDHQSRNLKYASWKEFSD) are Cytoplasmic-facing. The chain crosses the membrane as a helical span at residues 94-116 (FMKWSIPAFLYFLDNLIVFYVLS). Over 117–119 (YLQ) the chain is Lumenal. The helical transmembrane segment at 120-142 (PAMAVIFSNFSIITTALLFRIVL) threads the bilayer. Over 143–147 (KRRLN) the chain is Cytoplasmic. Residues 148–168 (WIQWASLLTLFLSIVALTAGT) form a helical membrane-spanning segment. The Lumenal segment spans residues 169 to 228 (KTLQHNLAGRGFHHDAFFSPSNSCLLFRSECPRKDNCTAKEWTFPEAKWNTTARVFSHIR). N-linked (GlcNAc...) asparagine glycosylation occurs at Asn204. A helical transmembrane segment spans residues 229–249 (LGMGHVLIIVQCFISSMANIY). The Cytoplasmic portion of the chain corresponds to 250–263 (NEKILKEGNQLTES). The helical transmembrane segment at 264 to 284 (IFIQNSKLYFFGILFNGLTLG) threads the bilayer. The Lumenal portion of the chain corresponds to 285–303 (LQRSNRDQIKNCGFFYGHS). Residues 304 to 324 (AFSVALIFVTAFQGLSVAFIL) traverse the membrane as a helical segment. At 325–330 (KFLDNM) the chain is on the cytoplasmic side. A helical transmembrane segment spans residues 331–351 (FHVLMAQVTTVIITTVSVLVF). At 352-354 (DFR) the chain is on the lumenal side. Residues 355–375 (PSLEFFLEAPSVLLSIFIYNA) traverse the membrane as a helical segment. Residues 376-424 (SKPQVPEYAPRQERIRDLSGNLWERSSGDGEELERLTKPKSDESDEDTF) lie on the Cytoplasmic side of the membrane. Phosphoserine occurs at positions 394, 416, and 419. Positions 397 to 424 (LWERSSGDGEELERLTKPKSDESDEDTF) are disordered. Residues 408–417 (LERLTKPKSD) are compositionally biased toward basic and acidic residues.

It belongs to the nucleotide-sugar transporter family. SLC35A subfamily. As to quaternary structure, probably forms homooligomers and heterooligomers with SLC35A1, SLC35A2, SLC35A3 and SLC35A4.

The protein localises to the golgi apparatus membrane. It carries out the reaction UMP(out) + UDP-alpha-D-glucuronate(in) = UMP(in) + UDP-alpha-D-glucuronate(out). The catalysed reaction is UMP(out) + UDP-N-acetyl-alpha-D-glucosamine(in) = UMP(in) + UDP-N-acetyl-alpha-D-glucosamine(out). It catalyses the reaction UDP-N-acetyl-alpha-D-galactosamine(in) + UMP(out) = UDP-N-acetyl-alpha-D-galactosamine(out) + UMP(in). Probable UDP-sugar:UMP transmembrane antiporter involved in UDP-alpha-D-glucuronate/UDP-GlcA, UDP-GlcNAc/UDP-N-acetyl-alpha-D-glucosamine and UDP-N-acetyl-alpha-D-galactosamine/UDP-GalNAc transport from the cytosol to the lumen of the Golgi. This chain is UDP-sugar transporter protein SLC35A5, found in Homo sapiens (Human).